The primary structure comprises 274 residues: Penicillin-insensitive murein endopeptidase (274 aa).

The N-terminal stretch at 1–19 is a signal peptide; that stretch reads MNKTAIALLALLASSVSLA. 3 cysteine pairs are disulfide-bonded: cysteine 44–cysteine 265, cysteine 187–cysteine 235, and cysteine 216–cysteine 223. Histidine 110, histidine 113, aspartate 120, aspartate 147, histidine 150, and histidine 211 together coordinate Zn(2+). Residues 227-274 are disordered; that stretch reads PLPPPGDGCGAELQSWFEPPKPGTTKPEKKTPPPLPPSCQALLDEHVI.

This sequence belongs to the peptidase M74 family. As to quaternary structure, dimer. Requires Zn(2+) as cofactor.

It is found in the periplasm. In terms of biological role, murein endopeptidase that cleaves the D-alanyl-meso-2,6-diamino-pimelyl amide bond that connects peptidoglycan strands. Likely plays a role in the removal of murein from the sacculus. In Escherichia coli O157:H7, this protein is Penicillin-insensitive murein endopeptidase.